A 469-amino-acid chain; its full sequence is Interstitial collagenase (469 aa).

Positions 1-19 (MFSLLLLLLLLCNTGSHGF) are cleaved as a signal peptide. The propeptide at 20 to 99 (PAATSETQEQ…PRCGVPDVAE (80 aa)) is activation peptide. Position 57 is a phosphoserine (Ser-57). The short motif at 90-97 (PRCGVPDV) is the Cysteine switch element. Residue Cys-92 participates in Zn(2+) binding. Asn-120 is a glycosylation site (N-linked (GlcNAc...) asparagine). Asp-124 and Asp-158 together coordinate Ca(2+). Residues His-168 and Asp-170 each contribute to the Zn(2+) site. Residues Asp-175, Gly-176, Gly-178, and Asn-180 each coordinate Ca(2+). His-183 is a Zn(2+) binding site. Positions 190, 192, and 194 each coordinate Ca(2+). His-196 contributes to the Zn(2+) binding site. Asp-198, Glu-199, and Glu-201 together coordinate Ca(2+). Residue His-218 coordinates Zn(2+). The active site involves Glu-219. Residues His-222 and His-228 each contribute to the Zn(2+) site. Thr-274 is modified (phosphothreonine). 4 Hemopexin repeats span residues 275–324 (PQVC…WPQV), 325–371 (PNGL…FGFP), 374–422 (VKNI…FPGI), and 423–466 (GNKV…WFNC). An intrachain disulfide couples Cys-278 to Cys-466. Residues Asp-285 and Gln-329 each coordinate Ca(2+). Tyr-360 carries the phosphotyrosine; by PKDCC modification. Ca(2+) is bound by residues Asp-378 and Asp-427.

This sequence belongs to the peptidase M10A family. The cofactor is Ca(2+). Zn(2+) is required as a cofactor. In terms of processing, undergoes autolytic cleavage to produce a N-terminal fragment having reduced collagenolytic activity. Post-translationally, tyrosine phosphorylated in platelets by PKDCC/VLK.

The protein localises to the secreted. Its subcellular location is the extracellular space. The protein resides in the extracellular matrix. It catalyses the reaction Cleavage of the triple helix of collagen at about three-quarters of the length of the molecule from the N-terminus, at 775-Gly-|-Ile-776 in the alpha1(I) chain. Cleaves synthetic substrates and alpha-macroglobulins at bonds where P1' is a hydrophobic residue.. With respect to regulation, can be activated without removal of the activation peptide. Functionally, cleaves collagens of types I, II, and III at one site in the helical domain. Also cleaves collagens of types VII and X. This chain is Interstitial collagenase (MMP1), found in Sus scrofa (Pig).